The following is a 77-amino-acid chain: GDVSVVGFDDSPLIAFTSPPLSTVRQPVQAMATAAVGALLEEIEGNPVQRTEFVFQPELVVRGSTAQPPGRVSQVLS.

Its function is as follows. Putative sugar-binding regulatory protein for the alpha-amylase gene. This is an uncharacterized protein from Streptomyces violaceus (Streptomyces venezuelae).